We begin with the raw amino-acid sequence, 198 residues long: MEHYISLLIRSIFIENLALSFFLGMCTFLAVSKKVKTAMGLGIAVIVVQTVAVPANNLIYNYVLKDGALVSGLDLSFLSFITFIGVIAALVQILEMALDKYFPALYNALGIFLPLITVNCAIFGGVSFMVQRDYNFVESVVYGVGSGAGWMLAIVAMAGIREKMKYSDVPEGLRGLGITFITAGLMALGFMSFSGISL.

Transmembrane regions (helical) follow at residues 11-31 (SIFI…FLAV), 39-59 (MGLG…NNLI), 77-97 (FLSF…LEMA), 110-130 (GIFL…SFMV), 140-160 (VVYG…MAGI), and 176-196 (LGIT…FSGI).

Belongs to the NqrDE/RnfAE family. As to quaternary structure, composed of six subunits; NqrA, NqrB, NqrC, NqrD, NqrE and NqrF.

The protein resides in the cell inner membrane. It carries out the reaction a ubiquinone + n Na(+)(in) + NADH + H(+) = a ubiquinol + n Na(+)(out) + NAD(+). NQR complex catalyzes the reduction of ubiquinone-1 to ubiquinol by two successive reactions, coupled with the transport of Na(+) ions from the cytoplasm to the periplasm. NqrA to NqrE are probably involved in the second step, the conversion of ubisemiquinone to ubiquinol. The protein is Na(+)-translocating NADH-quinone reductase subunit E of Aeromonas hydrophila subsp. hydrophila (strain ATCC 7966 / DSM 30187 / BCRC 13018 / CCUG 14551 / JCM 1027 / KCTC 2358 / NCIMB 9240 / NCTC 8049).